Consider the following 135-residue polypeptide: Cystatin-1 (135 aa).

The N-terminal stretch at 1–24 (MRKHRIVSLVAALLVLLALAAVSS) is a signal peptide. The short motif at 86–90 (QVVAG) is the Secondary area of contact element.

It belongs to the cystatin family. Phytocystatin subfamily.

The sequence is that of Cystatin-1 (RAMDAZC7) from Zea mays (Maize).